The chain runs to 605 residues: Isocitrate dehydrogenase kinase/phosphatase (605 aa).

Residues 327-333 (APGIKGL) and lysine 348 contribute to the ATP site. Residue aspartate 383 is part of the active site.

Belongs to the AceK family.

It localises to the cytoplasm. The enzyme catalyses L-seryl-[isocitrate dehydrogenase] + ATP = O-phospho-L-seryl-[isocitrate dehydrogenase] + ADP + H(+). In terms of biological role, bifunctional enzyme which can phosphorylate or dephosphorylate isocitrate dehydrogenase (IDH) on a specific serine residue. This is a regulatory mechanism which enables bacteria to bypass the Krebs cycle via the glyoxylate shunt in response to the source of carbon. When bacteria are grown on glucose, IDH is fully active and unphosphorylated, but when grown on acetate or ethanol, the activity of IDH declines drastically concomitant with its phosphorylation. In Burkholderia multivorans (strain ATCC 17616 / 249), this protein is Isocitrate dehydrogenase kinase/phosphatase.